A 956-amino-acid chain; its full sequence is MAM domain-containing glycosylphosphatidylinositol anchor protein 1 (956 aa).

An N-terminal signal peptide occupies residues 1–18 (MEVTCLLLLALIPFHCRG). Ig-like domains follow at residues 24–123 (PAQA…KSIR) and 132–230 (PVLT…KSIT). Asn-42 is a glycosylation site (N-linked (GlcNAc...) asparagine). Cystine bridges form between Cys-60-Cys-108 and Cys-157-Cys-214. Residues Asn-235, Asn-257, and Asn-307 are each glycosylated (N-linked (GlcNAc...) asparagine). 4 consecutive Ig-like domains span residues 240-323 (PTLK…KTVN), 338-432 (PDMI…VEVN), 440-534 (PTIS…VQLT), and 539-632 (PEVE…FQVS). 4 disulfides stabilise this stretch: Cys-262–Cys-308, Cys-357–Cys-415, Cys-463–Cys-514, and Cys-560–Cys-616. Positions 644-744 (TPNPTRSHKL…SRVIHYTEPI (101 aa)) constitute a Fibronectin type-III domain. The MAM domain maps to 752–919 (NTCHFEDEKI…VTLKKGECPR (168 aa)). Polar residues predominate over residues 780-789 (LTQNPKRSPN). Residues 780-799 (LTQNPKRSPNTGPPTDISGT) form a disordered region. The GPI-anchor amidated serine moiety is linked to residue Ser-933. The propeptide at 934–956 (GAPRLSSLQLWGSMTIFLLALQR) is removed in mature form.

Interacts heterophilically through its MAM domain with proteins in axon-rich regions and through its Ig-like domains with proteins in differentiating muscle. Interacts (through the Ig-like domains) with NLGN2. As to expression, high levels detected in developing central and peripheral nervous systems with little expression elsewhere. In brain, highest levels in cerebral cortex and hindbrain at E15. At postnatal day 1, highest levels in basilar pons and superficial layers of the neocortex. In the developing spinal cord, restricted to a subpopulation of neurons in the dorsal and spinal ventral cord, probably D1 interneurons. Expressed in brain.

It is found in the cell membrane. Required for radial migration of cortical neurons in the superficial layer of the neocortex. Plays a role in the formation or maintenance of inhibitory synapses. May function by inhibiting the activity of NLGN2. This Rattus norvegicus (Rat) protein is MAM domain-containing glycosylphosphatidylinositol anchor protein 1 (Mdga1).